The sequence spans 123 residues: UPF0102 protein CLD_2200 (123 aa).

Belongs to the UPF0102 family.

The chain is UPF0102 protein CLD_2200 from Clostridium botulinum (strain Okra / Type B1).